Reading from the N-terminus, the 334-residue chain is N-acetyl-gamma-glutamyl-phosphate reductase (334 aa).

Cysteine 154 is an active-site residue.

Belongs to the NAGSA dehydrogenase family. Type 1 subfamily.

It is found in the cytoplasm. It carries out the reaction N-acetyl-L-glutamate 5-semialdehyde + phosphate + NADP(+) = N-acetyl-L-glutamyl 5-phosphate + NADPH + H(+). It participates in amino-acid biosynthesis; L-arginine biosynthesis; N(2)-acetyl-L-ornithine from L-glutamate: step 3/4. Functionally, catalyzes the NADPH-dependent reduction of N-acetyl-5-glutamyl phosphate to yield N-acetyl-L-glutamate 5-semialdehyde. The protein is N-acetyl-gamma-glutamyl-phosphate reductase of Aliivibrio fischeri (strain ATCC 700601 / ES114) (Vibrio fischeri).